Here is a 669-residue protein sequence, read N- to C-terminus: DNA mismatch repair protein MutL (669 aa).

The segment at 361–409 (ENVFSQPYQAPVTSSTQKKSTGAYQGSAGKGLTDTQKSPQKTLDTRQFG) is disordered. Polar residues-rich tracts occupy residues 363–384 (VFSQPYQAPVTSSTQKKSTGAY) and 393–402 (TDTQKSPQKT).

Belongs to the DNA mismatch repair MutL/HexB family.

Its function is as follows. This protein is involved in the repair of mismatches in DNA. It is required for dam-dependent methyl-directed DNA mismatch repair. May act as a 'molecular matchmaker', a protein that promotes the formation of a stable complex between two or more DNA-binding proteins in an ATP-dependent manner without itself being part of a final effector complex. In Proteus mirabilis (strain HI4320), this protein is DNA mismatch repair protein MutL.